A 1468-amino-acid chain; its full sequence is ABC transporter G family member 34 (1468 aa).

Positions 33 to 53 are disordered; sequence NGAFSRSSSSSSRRMRGEEDD. The ABC transporter 1 domain occupies 178–450; the sequence is ANALGILPTR…FELMGFKCPE (273 aa). 211 to 218 contributes to the ATP binding site; it reads GPPGSGKT. The ABC transmembrane type-2 1 domain maps to 528–741; it reads ELLKANIDRE…AQNAVSVNEF (214 aa). Transmembrane regions (helical) follow at residues 546 to 566, 575 to 595, 634 to 654, 666 to 686, 690 to 710, and 778 to 798; these read FVYI…MTVF, SVAD…MIML, SPMS…VIGF, LLML…GGAA, IVAN…GGFI, and IGFG…TLAL. Residues 871-1123 form the ABC transporter 2 domain; that stretch reads LTFEDIKYSV…ELIKYFEGIQ (253 aa). 916–923 provides a ligand contact to ATP; it reads GVSGAGKT. An ABC transmembrane type-2 2 domain is found at 1196–1410; sequence IQCLACLWKQ…TLYGLIVSQY (215 aa). The next 7 helical transmembrane spans lie at 1217–1237, 1247–1267, 1303–1323, 1330–1350, 1360–1380, 1387–1407, and 1440–1460; these read AIRL…FWDL, LFNA…LNGQ, FPYT…MIGF, FFWY…YGMM, VASI…GFVI, VWWR…GLIV, and FVAV…GFAI.

Belongs to the ABC transporter superfamily. ABCG family. PDR (TC 3.A.1.205) subfamily.

It localises to the membrane. Functionally, may be a general defense protein. The protein is ABC transporter G family member 34 of Oryza sativa subsp. japonica (Rice).